The sequence spans 235 residues: 2,3-bisphosphoglycerate-dependent phosphoglycerate mutase (235 aa).

Substrate is bound by residues 8 to 15 (RHGESIWN), 21 to 22 (TG), arginine 58, 110 to 113 (ERYY), lysine 121, 137 to 138 (RR), and 181 to 182 (GN). Histidine 9 serves as the catalytic Tele-phosphohistidine intermediate. The active-site Proton donor/acceptor is the glutamate 110.

Belongs to the phosphoglycerate mutase family. BPG-dependent PGAM subfamily.

The catalysed reaction is (2R)-2-phosphoglycerate = (2R)-3-phosphoglycerate. It functions in the pathway carbohydrate degradation; glycolysis; pyruvate from D-glyceraldehyde 3-phosphate: step 3/5. In terms of biological role, catalyzes the interconversion of 2-phosphoglycerate and 3-phosphoglycerate. The polypeptide is 2,3-bisphosphoglycerate-dependent phosphoglycerate mutase (Methanococcus vannielii (strain ATCC 35089 / DSM 1224 / JCM 13029 / OCM 148 / SB)).